Consider the following 276-residue polypeptide: MATTGDDTLTITASDYIQHHLTNAKMCSTDGGIAFNYACQDAGFWTWHIDSLLFSVGLGVLFLWLFYKVGQKATIGVPGKLQCFVEMCVEGVDKIVKDSFHGKNAVIAPLGLTIFVWVFLMNLMDLIPVDFVPEAAKRLLGVPYLKIVPTTDLNVTLGLALSVFVLIVFYSIKVKGFSGFTKELTMQPFNHWALIPINFVLETVTLIAKPISLSLRLFGNLYAGELIFILIALMPWWAQFALSVPWAIFHILVIVLQAFIFMMLTIVYLSMAHEDH.

Helical transmembrane passes span W47–Y67, I107–I127, D152–I172, P188–A208, L226–W246, and A247–V267.

It belongs to the ATPase A chain family. F-type ATPases have 2 components, CF(1) - the catalytic core - and CF(0) - the membrane proton channel. CF(1) has five subunits: alpha(3), beta(3), gamma(1), delta(1), epsilon(1). CF(0) has three main subunits: a(1), b(2) and c(9-12). The alpha and beta chains form an alternating ring which encloses part of the gamma chain. CF(1) is attached to CF(0) by a central stalk formed by the gamma and epsilon chains, while a peripheral stalk is formed by the delta and b chains.

Its subcellular location is the cell inner membrane. Functionally, key component of the proton channel; it plays a direct role in the translocation of protons across the membrane. The polypeptide is ATP synthase subunit a (Shewanella halifaxensis (strain HAW-EB4)).